Consider the following 530-residue polypeptide: Carbohydrate sulfotransferase 2 (530 aa).

The disordered stretch occupies residues 1-20; sequence MSRSSPRALPPGALPRPLPA. The Cytoplasmic portion of the chain corresponds to 1-54; the sequence is MSRSSPRALPPGALPRPLPAAPAAVQRALLPPWPRRAGRRWPASPLGMKVFRRK. Residues 8–20 show a composition bias toward pro residues; it reads ALPPGALPRPLPA. A helical; Signal-anchor for type II membrane protein membrane pass occupies residues 55–75; sequence ALVLCAGYALLLVLTMLNLLD. The Lumenal segment spans residues 76–530; sequence YKWHKEPLQQ…SKTLLRKPRL (455 aa). The disordered stretch occupies residues 97-128; that stretch reads GAAGAGWGRPGSPPAAPPRAHSRMDPRTPYRP. 173–179 lines the 3'-phosphoadenylyl sulfate pocket; the sequence is WRSGSSF. N-linked (GlcNAc...) asparagine glycosylation occurs at Asn-243. 332 to 340 provides a ligand contact to 3'-phosphoadenylyl sulfate; it reads RDPRAVASS. N-linked (GlcNAc...) asparagine glycans are attached at residues Asn-457 and Asn-475.

It belongs to the sulfotransferase 1 family. Gal/GlcNAc/GalNAc subfamily. In terms of assembly, homodimer; disulfide-linked. Homodimerization is not essential for enzyme activity. As to expression, in brain, it is expressed in pyramidal cells in the CA3 subregion of the hippocampus, cerebellar nucleus and Purkinje cells. Expressed in peripheral lymph nodes.

Its subcellular location is the golgi apparatus. The protein localises to the trans-Golgi network membrane. It carries out the reaction 3-O-{N-acetyl-beta-D-glucosaminyl-(1-&gt;3)-beta-D-galactosyl-(1-&gt;3)-N-acetyl-alpha-D-galactosaminyl}-L-threonyl-[protein] + 3'-phosphoadenylyl sulfate = 3-O-{6-O-sulfo-N-acetyl-beta-D-glucosaminyl-(1-&gt;3)-beta-D-galactosyl-(1-&gt;3)-N-acetyl-alpha-D-galactosaminyl}-L-threonyl-[protein] + adenosine 3',5'-bisphosphate + H(+). It catalyses the reaction 3-O-{N-acetyl-beta-D-glucosaminyl-(1-&gt;3)-beta-D-galactosyl-(1-&gt;3)-N-acetyl-alpha-D-galactosaminyl}-L-seryl-[protein] + 3'-phosphoadenylyl sulfate = 3-O-{6-O-sulfo-N-acetyl-beta-D-glucosaminyl-(1-&gt;3)-beta-D-galactosyl-(1-&gt;3)-N-acetyl-alpha-D-galactosaminyl}-L-seryl-[protein] + adenosine 3',5'-bisphosphate + H(+). The catalysed reaction is a 3-O-{beta-D-galactosyl-(1-&gt;3)-[N-acetyl-beta-D-glucosaminyl-(1-&gt;6)]-N-acetyl-alpha-D-galactosaminyl}-L-threonyl-[protein] + 3'-phosphoadenylyl sulfate = 3-O-{beta-D-galactosyl-(1-&gt;3)-[6-O-sulfo-N-acetyl-beta-D-glucosaminyl-(1-&gt;6)]-N-acetyl-alpha-D-galactosaminyl}-L-threonyl-[protein] + adenosine 3',5'-bisphosphate + H(+). The enzyme catalyses 3-O-{beta-D-galactosyl-(1-&gt;3)-[N-acetyl-beta-D-glucosaminyl-(1-&gt;6)]-N-acetyl-alpha-D-galactosaminyl}-L-seryl-[protein] + 3'-phosphoadenylyl sulfate = 3-O-{beta-D-galactosyl-(1-&gt;3)-[6-O-sulfo-N-acetyl-beta-D-glucosaminyl-(1-&gt;6)]-N-acetyl-alpha-D-galactosaminyl}-L-seryl-[protein] + adenosine 3',5'-bisphosphate + H(+). It functions in the pathway protein modification; carbohydrate sulfation. Sulfotransferase that utilizes 3'-phospho-5'-adenylyl sulfate (PAPS) as sulfonate donor to catalyze the transfer of sulfate to position 6 of non-reducing N-acetylglucosamine (GlcNAc) residues within keratan-like structures on N-linked glycans and within mucin-associated glycans that can ultimately serve as SELL ligands. SELL ligands are present in high endothelial cells (HEVs) and play a central role in lymphocyte homing at sites of inflammation. Participates in biosynthesis of the SELL ligand sialyl 6-sulfo Lewis X and in lymphocyte homing to Peyer patches. Has no activity toward O-linked sugars. Its substrate specificity may be influenced by its subcellular location. Sulfates GlcNAc residues at terminal, non-reducing ends of oligosaccharide chains. The polypeptide is Carbohydrate sulfotransferase 2 (Chst2) (Mus musculus (Mouse)).